Reading from the N-terminus, the 203-residue chain is SOSS complex subunit B1 (203 aa).

Positions Ile22–Leu92 form a DNA-binding region, OB. The tract at residues Pro111–Arg203 is disordered. Residues Ala117–Glu128 are compositionally biased toward polar residues. Positions Ser129–Ser140 are enriched in low complexity. Positions Glu149–His182 are enriched in polar residues.

This sequence belongs to the SOSS-B family. SOSS-B1 subfamily. As to quaternary structure, component of the SOSS complex, composed of soss-b (soss-b1/nabp2 or soss-b2/nabp1), soss-a/ints3 and soss-c/inip. SOSS complexes containing soss-b1/nabp2 are more abundant than complexes containing soss-b2/nabp1.

The protein localises to the nucleus. Component of the SOSS complex, a multiprotein complex that functions downstream of the MRN complex to promote DNA repair and G2/M checkpoint. In the SOSS complex, acts as a sensor of single-stranded DNA that binds to single-stranded DNA. The SOSS complex associates with DNA lesions and influences diverse endpoints in the cellular DNA damage response including cell-cycle checkpoint activation, recombinational repair and maintenance of genomic stability. Required for efficient homologous recombination-dependent repair of double-strand breaks (DSBs). The protein is SOSS complex subunit B1 (nabp2) of Xenopus tropicalis (Western clawed frog).